We begin with the raw amino-acid sequence, 727 residues long: Catalase-peroxidase (727 aa).

Residues 1–21 form a disordered region; sequence MDAKVEDNIAGKCPMGHGRGP. Residues 95–217 constitute a cross-link (tryptophyl-tyrosyl-methioninium (Trp-Tyr) (with M-243)); sequence WHAAGTYRIT…LGAVQMGLIY (123 aa). His96 acts as the Proton acceptor in catalysis. A cross-link (tryptophyl-tyrosyl-methioninium (Tyr-Met) (with W-95)) is located at residues 217–243; the sequence is YVNPEGPNGNPDPLASARDIRETFARM. His258 contacts heme b.

The protein belongs to the peroxidase family. Peroxidase/catalase subfamily. As to quaternary structure, homodimer or homotetramer. The cofactor is heme b. In terms of processing, formation of the three residue Trp-Tyr-Met cross-link is important for the catalase, but not the peroxidase activity of the enzyme.

It carries out the reaction H2O2 + AH2 = A + 2 H2O. The enzyme catalyses 2 H2O2 = O2 + 2 H2O. Bifunctional enzyme with both catalase and broad-spectrum peroxidase activity. Important for stationary phase survival. This is Catalase-peroxidase from Caulobacter vibrioides (strain ATCC 19089 / CIP 103742 / CB 15) (Caulobacter crescentus).